A 181-amino-acid polypeptide reads, in one-letter code: Oligoribonuclease (181 aa).

The 164-residue stretch at Leu8 to Leu171 folds into the Exonuclease domain. The active site involves Tyr129.

It belongs to the oligoribonuclease family. As to quaternary structure, homodimer.

Its subcellular location is the cytoplasm. Functionally, 3'-to-5' exoribonuclease specific for small oligoribonucleotides. The protein is Oligoribonuclease of Escherichia coli O139:H28 (strain E24377A / ETEC).